The primary structure comprises 194 residues: MGVSNRLAWGCPTKEHLLPHFLEHLGNNHLDIGVGTGFYLTHVPESSLISLMDLNEASLNAASTRAGESKIKHKISHDVFEPYPAALHGQFDSISMSYLLHCLPGNISTKSCVIRNAAQALTDDGTLYGATILGDGVVHNSFGQKLMRIYNQKGIFSNTKDSEEGLTHILSEHFENVKTKVQGTVVMFSASGKK.

This is an uncharacterized protein from Escherichia coli (strain K12).